We begin with the raw amino-acid sequence, 767 residues long: Syn-copalyl diphosphate synthase (767 aa).

The disordered stretch occupies residues 45 to 74 (GPMLISKSPPYPASEETREWEAEGQHEHTD). Residues 59 to 74 (EETREWEAEGQHEHTD) show a composition bias toward basic and acidic residues. Residue K233 coordinates substrate. Mg(2+) contacts are provided by D365 and D367. A DXDD motif motif is present at residues 365–368 (DIDD). K453 is a binding site for substrate.

Requires Mg(2+) as cofactor.

The catalysed reaction is (2E,6E,10E)-geranylgeranyl diphosphate = 9alpha-copalyl diphosphate. Its function is as follows. Catalyzes the conversion of geranylgeranyl diphosphate to the phytoalexin precursor syn-copalyl diphosphate. The chain is Syn-copalyl diphosphate synthase (CPS4) from Oryza sativa subsp. indica (Rice).